A 37-amino-acid chain; its full sequence is PDGRNAAAKAFDLITPTVRKGCCSNPACILNNPNQCG.

Positions 1 to 20 (PDGRNAAAKAFDLITPTVRK) are excised as a propeptide. 2 cysteine pairs are disulfide-bonded: C22–C28 and C23–C36. C36 carries the post-translational modification Cysteine amide.

It belongs to the conotoxin A superfamily. In terms of tissue distribution, expressed by the venom duct.

It localises to the secreted. In terms of biological role, alpha-conotoxins bind to the nicotinic acetylcholine receptors (nAChR) and inhibit them. This toxin inhibits mammalian alpha-3-beta-2/CHRNA3-CHRNB2 nAChR (IC(50)=9.4 nM (rat), IC(50)=8.8 nM (human)), as well as the subunit chimera alpha-6/alpha-3-beta-2-beta-3 nAChR (CHRNA6/CHRNA3-CHRNB2-CHRNB3)(IC(50)=2.1 nM (rat), IC(50)=1.7 nM (human)). Binds to rat alpha-6/alpha-3-beta-2-beta-3 more rapidly than to alpha-3-beta-2, and dissociates more rapidly from alpha-3-beta-2 than from alpha-6/alpha-3-beta-2-beta-3. This chain is Conotoxin Bt1.8, found in Conus betulinus (Beech cone).